The sequence spans 254 residues: Trans-aconitate 2-methyltransferase (254 aa).

Belongs to the methyltransferase superfamily. Tam family.

Its subcellular location is the cytoplasm. The catalysed reaction is trans-aconitate + S-adenosyl-L-methionine = (E)-3-(methoxycarbonyl)pent-2-enedioate + S-adenosyl-L-homocysteine. Catalyzes the S-adenosylmethionine monomethyl esterification of trans-aconitate. This is Trans-aconitate 2-methyltransferase from Rhodococcus jostii (strain RHA1).